The primary structure comprises 155 residues: Protein SprT-like (155 aa).

A SprT-like domain is found at 6–148 (LQRLVERVSL…VCGQCGGKLM (143 aa)). Residue His67 participates in Zn(2+) binding. Glu68 is an active-site residue. His71 contributes to the Zn(2+) binding site.

It belongs to the SprT family. Requires Zn(2+) as cofactor.

It localises to the cytoplasm. This Geobacillus sp. (strain WCH70) protein is Protein SprT-like.